Here is a 570-residue protein sequence, read N- to C-terminus: Multidrug and toxin extrusion protein 1 (570 aa).

The residue at position 1 (methionine 1) is an N-acetylmethionine. Residues 1–37 (MEAPEEPAPVRGGPEATLEIHGSRFLRLSAFREELRA) lie on the Cytoplasmic side of the membrane. Residues 38–58 (LLVLAGPAFLVQLMVFLISFI) traverse the membrane as a helical segment. Topologically, residues 59–72 (SSVFCGHLGKLELD) are extracellular. The helical transmembrane segment at 73-93 (AVTLAIAVINVTGVSVGFGLS) threads the bilayer. The Cytoplasmic segment spans residues 94–120 (SACDTLISQTYGSQNLKHVGVILQRSA). Residues 121–141 (LILLLCCFPCWALFLNTQHIL) traverse the membrane as a helical segment. The Extracellular segment spans residues 142-152 (LLFRQDPDVSR). The helical transmembrane segment at 153–173 (LTQTYVTIFIPALPATFLYML) threads the bilayer. Residues 174–176 (QVK) are Cytoplasmic-facing. Residues 177–197 (YLLNQGIVLPQIVTGVAANLV) form a helical membrane-spanning segment. Over 198–216 (NALANYLFLHQLHLGAIGS) the chain is Extracellular. Residues 217-237 (ALANLISQYTLALLLFFYILG) traverse the membrane as a helical segment. At 238–251 (KKLHQATWGGWSLE) the chain is on the cytoplasmic side. Residues 252–272 (CLQDWASFLHLAVPSMLMLCM) form a helical membrane-spanning segment. Residues 273-295 (EWWAYEVGSFLSGILGMVELGAQ) are Extracellular-facing. A helical transmembrane segment spans residues 296 to 316 (SIVYELAIIVYMVPAGFSVAA). Residues 317–336 (SVRVGNALGAGDMEQARKSS) are Cytoplasmic-facing. Residues 337–357 (TVSLLITVLFAVAFSVLLLSC) traverse the membrane as a helical segment. Over 358 to 370 (KDHVGYIFTTDRD) the chain is Extracellular. Residues 371-391 (IINLVAQVVPIYAVSHLFEAL) form a helical membrane-spanning segment. The Cytoplasmic segment spans residues 392 to 408 (ACTSGGVLRGSGNQKVG). The helical transmembrane segment at 409-429 (AIVNTIGYYVVGLPIGIALMF) threads the bilayer. Residues 430-437 (ATKLGVMG) are Extracellular-facing. The helical transmembrane segment at 438 to 458 (LWSGIIICTVFQAVCFLGFII) threads the bilayer. Residues 459–546 (QLNWKKACQQ…LSRKQLVLRR (88 aa)) lie on the Cytoplasmic side of the membrane. The segment at 508 to 534 (DVGKTGETQSDQQMRQEEPLPEHPQDS) is disordered. Residues 521 to 533 (MRQEEPLPEHPQD) show a composition bias toward basic and acidic residues. The helical transmembrane segment at 547–567 (GLLLLGVFLILLVGILVRFYV) threads the bilayer. Over 568–570 (RIQ) the chain is Extracellular.

Belongs to the multi antimicrobial extrusion (MATE) (TC 2.A.66.1) family.

Its subcellular location is the cell membrane. The protein localises to the apical cell membrane. It carries out the reaction thiamine(out) + H(+)(in) = thiamine(in) + H(+)(out). It catalyses the reaction estrone 3-sulfate(in) + H(+)(out) = estrone 3-sulfate(out) + H(+)(in). The catalysed reaction is creatinine(in) + H(+)(out) = creatinine(out) + H(+)(in). The enzyme catalyses agmatine(in) + H(+)(out) = agmatine(out) + H(+)(in). Multidrug efflux pump that functions as a H(+)/organic cation antiporter. Plays a physiological role in the excretion of cationic compounds including endogenous metabolites, drugs, toxins through the kidney and liver, into urine and bile respectively. Mediates the efflux of endogenous compounds such as creatinine, vitamin B1/thiamine, agmatine and estrone-3-sulfate. May also contribute to regulate the transport of cationic compounds in testis across the blood-testis-barrier. The protein is Multidrug and toxin extrusion protein 1 (SLC47A1) of Pongo abelii (Sumatran orangutan).